We begin with the raw amino-acid sequence, 146 residues long: Angiogenin (146 aa).

The first 24 residues, 1-24, serve as a signal peptide directing secretion; the sequence is MVMGLGLFLLVFMLGLGLTPPTLA. The residue at position 25 (Gln-25) is a Pyrrolidone carboxylic acid. His-37 (proton acceptor) is an active-site residue. Arg-45 serves as a coordination point for tRNA. Disulfide bonds link Cys-50-Cys-105, Cys-63-Cys-116, and Cys-81-Cys-131. The Nucleolar localization signal motif lies at 55-59; it reads RRRGL. Positions 105 and 127 each coordinate tRNA. The Proton donor role is filled by His-138.

Belongs to the pancreatic ribonuclease family. As to quaternary structure, homodimer. Interacts with RNH1; inhibiting ANG ribonuclease activity. Interacts with PCNA.

The protein localises to the secreted. Its subcellular location is the nucleus. The protein resides in the nucleolus. It is found in the cytoplasm. It localises to the stress granule. Has weak tRNA ribonuclease activity by itself due to partial autoinhibition by its C-terminus, which folds into a short alpha-helix that partially occludes the substrate-binding site. In absence of stress, the ribonuclease activity is inhibited by RNH1 in the cytoplasm. In response to stress, dissociates from RNH1 in the cytoplasm and associates with cytoplasmic ribosomes with vacant A-sites: ribosomes directly activate the tRNA ribonuclease activity of ANG by refolding the C-terminal alpha-helix. In response to stress, the angiogenic activity of ANG is inhibited by RNH1 in the nucleus. Functionally, secreted ribonuclease that can either promote or restrict cell proliferation of target cells, depending on the context. Endocytosed in target cells via its receptor PLXNB2 and translocates to the cytoplasm or nucleus. Under stress conditions, localizes to the cytoplasm and promotes the assembly of stress granules (SGs): specifically cleaves a subset of tRNAs within anticodon loops to produce tRNA-derived stress-induced fragments (tiRNAs), resulting in translation repression and inhibition of cell proliferation. tiRNas also prevent formation of apoptosome, thereby promoting cell survival. Preferentially cleaves RNAs between a pyrimidine and an adenosine residue, suggesting that it cleaves the anticodon loop of tRNA(Ala) (32-UUAGCAU-38) after positions 33 and 36. Cleaves a subset of tRNAs, including tRNA(Ala), tRNA(Glu), tRNA(Gly), tRNA(Lys), tRNA(Val), tRNA(His), tRNA(Asp) and tRNA(Sec). Under growth conditions and in differentiated cells, translocates to the nucleus and stimulates ribosomal RNA (rRNA) transcription, including that containing the initiation site sequences of 45S rRNA, thereby promoting cell growth and proliferation. Angiogenin induces vascularization of normal and malignant tissues via its ability to promote rRNA transcription. Involved in hematopoietic stem and progenitor cell (HSPC) growth and survival by promoting rRNA transcription in growth conditions and inhibiting translation in response to stress, respectively. Mediates the crosstalk between myeloid and intestinal epithelial cells to protect the intestinal epithelial barrier integrity: secreted by myeloid cells and promotes intestinal epithelial cells proliferation and survival. Also mediates osteoclast-endothelial cell crosstalk in growing bone: produced by osteoclasts and protects the neighboring vascular cells against senescence by promoting rRNA transcription. The polypeptide is Angiogenin (ANG) (Rhinopithecus avunculus (Tonkin snub-nosed monkey)).